A 699-amino-acid chain; its full sequence is Elongation factor G (699 aa).

Residues 8 to 290 (NKYRNLGIMA…KVIELLPSPV (283 aa)) form the tr-type G domain. GTP is bound by residues 17–24 (AHIDAGKT), 88–92 (DTPGH), and 142–145 (NKMD).

This sequence belongs to the TRAFAC class translation factor GTPase superfamily. Classic translation factor GTPase family. EF-G/EF-2 subfamily.

The protein localises to the cytoplasm. Catalyzes the GTP-dependent ribosomal translocation step during translation elongation. During this step, the ribosome changes from the pre-translocational (PRE) to the post-translocational (POST) state as the newly formed A-site-bound peptidyl-tRNA and P-site-bound deacylated tRNA move to the P and E sites, respectively. Catalyzes the coordinated movement of the two tRNA molecules, the mRNA and conformational changes in the ribosome. This Dichelobacter nodosus (strain VCS1703A) protein is Elongation factor G.